Reading from the N-terminus, the 194-residue chain is Putative manganese efflux pump MntP (194 aa).

The next 6 membrane-spanning stretches (helical) occupy residues 3–23, 37–57, 69–89, 110–132, 147–167, and 172–192; these read PFSI…AAIG, LRAG…GWLL, DHWI…VAGL, LGLA…SLAF, CTFS…NLIG, and MLGG…HLSG.

It belongs to the MntP (TC 9.B.29) family.

It localises to the cell inner membrane. Its function is as follows. Probably functions as a manganese efflux pump. This Xanthomonas axonopodis pv. citri (strain 306) protein is Putative manganese efflux pump MntP.